A 127-amino-acid chain; its full sequence is Putative truncated L-serine dehydratase YIL168W (127 aa).

N6-(pyridoxal phosphate)lysine is present on Lys39.

The protein belongs to the serine/threonine dehydratase family. Pyridoxal 5'-phosphate is required as a cofactor.

The protein localises to the cytoplasm. It catalyses the reaction L-serine = pyruvate + NH4(+). It participates in carbohydrate biosynthesis; gluconeogenesis. The sequence is that of Putative truncated L-serine dehydratase YIL168W from Saccharomyces cerevisiae (strain ATCC 204508 / S288c) (Baker's yeast).